We begin with the raw amino-acid sequence, 424 residues long: MAKNIQAIRGMNDYLPGETALWQRIEGSLKQVLGSYGYSEIRLPIVEQTPLFKRAIGEVTDVVEKEMYTFEDRNGDSLTLRPEGTAGCVRAGIEHGLLYNQEQRLWYVGPMFRHERPQKGRYRQFHQIGAEVFGLQGPDIDAELIMLTARWWRELGISDHVSLELNSIGSLEARANYRDALVAYLEQFTDKLDEDSKRRMYTNPLRVLDSKNPDVQALLNDAPALGDYLDEESKAHFAGLCALLDDAGIRYTVNQRLVRGLDYYNRTVFEWVTTSLGSQGTVCAGGRYDGLVEQLGGRATPGVGFAMGLERLVLLVQAVNPEFKADPVVDIYLVASGTDTQSAAMRLAEQVRDALPGVKLMTNHGGGNFKKQFARADKWGARIALVVGESEIADGNVVVKDLRSGEQTTVTQESVAAHLRTLLG.

This sequence belongs to the class-II aminoacyl-tRNA synthetase family. In terms of assembly, homodimer.

It localises to the cytoplasm. The catalysed reaction is tRNA(His) + L-histidine + ATP = L-histidyl-tRNA(His) + AMP + diphosphate + H(+). This Klebsiella pneumoniae (strain 342) protein is Histidine--tRNA ligase.